The chain runs to 555 residues: Connector enhancer of kinase suppressor of ras 3 (555 aa).

The SAM domain occupies 7-72 (WSPKQVVDWT…LEAVDLLCAL (66 aa)). One can recognise a CRIC domain in the interval 80–174 (TMKNLVLKLR…TAVQKDCLIA (95 aa)). The PDZ domain occupies 211 to 293 (EVHLPNVRPG…GVVLLLKKRP (83 aa)). Disordered regions lie at residues 308 to 333 (RWKPPLVQTSPPPTTTQSPESTMDAS), 362 to 389 (SFGYRGHSKSKQPLPVRKGSESPNSFLD), and 518 to 538 (PFQEEGSKKKSASSSAKASSG). The segment covering 311–329 (PPLVQTSPPPTTTQSPEST) has biased composition (low complexity). In terms of domain architecture, DUF1170 spans 325–546 (SPESTMDASL…SGEPSLLVSW (222 aa)). Residues serine 381 and serine 383 each carry the phosphoserine modification.

It belongs to the CNKSR family. As to quaternary structure, interacts with epithelial sodium channel ENaC. Interacts directly with SCNN1A (ENaC subunit alpha) and SCNN1B (ENaC subunit beta) C-terminal tails. Interacts with ENaC regulatory proteins NEDD4L, RAF1 and SGK1. As to expression, expressed in kidney.

The protein resides in the cytoplasm. It is found in the apical cell membrane. Functionally, involved in transepithelial sodium transport. Regulates aldosterone-induced and epithelial sodium channel (ENaC)-mediated sodium transport through regulation of ENaC cell surface expression. Acts as a scaffold protein coordinating the assembly of an ENaC-regulatory complex (ERC). In Mus musculus (Mouse), this protein is Connector enhancer of kinase suppressor of ras 3 (Cnksr3).